Reading from the N-terminus, the 254-residue chain is Putative epimerase LsrE (254 aa).

Residues 14-34 form a helical membrane-spanning segment; sequence VALLASYPLSVGILAGQWIAL. Residues H50, D52, and H81 each contribute to the a divalent metal cation site. Residue D52 is the Proton acceptor of the active site. Residues H81, 166–169, 199–201, and 221–222 each bind substrate; these read GYGS, DGS, and GS. D199 is a binding site for a divalent metal cation. Catalysis depends on D199, which acts as the Proton donor.

The protein belongs to the ribulose-phosphate 3-epimerase family. A divalent metal cation serves as cofactor.

It localises to the cell membrane. This Salmonella paratyphi A (strain ATCC 9150 / SARB42) protein is Putative epimerase LsrE (lsrE).